A 59-amino-acid polypeptide reads, in one-letter code: Large ribosomal subunit protein uL30 (59 aa).

This sequence belongs to the universal ribosomal protein uL30 family. As to quaternary structure, part of the 50S ribosomal subunit.

The sequence is that of Large ribosomal subunit protein uL30 from Leptospira borgpetersenii serovar Hardjo-bovis (strain JB197).